A 210-amino-acid chain; its full sequence is Heart- and neural crest derivatives-expressed protein 2 (210 aa).

Residues 81–101 (SGAGGLMQRPVKRRGTANRKE) are disordered. Over residues 90–101 (PVKRRGTANRKE) the composition is skewed to basic residues. A bHLH domain is found at 92–144 (KRRGTANRKERRRTISINSAFAELRECIPNVPADTKLSKIKTLRLATSYIAYL).

As to quaternary structure, efficient DNA binding requires dimerization with another bHLH protein. As to expression, heart, liver and spleen.

Its subcellular location is the nucleus. In terms of biological role, essential for cardiac morphogenesis and for the development of branchial arches. Binds DNA on E-box consensus sequence 5'-CANNTG-3'. The chain is Heart- and neural crest derivatives-expressed protein 2 (hand2) from Xenopus laevis (African clawed frog).